The chain runs to 369 residues: DNA replication and repair protein RecF (369 aa).

30 to 37 (GDNAQGKT) is an ATP binding site.

This sequence belongs to the RecF family.

It is found in the cytoplasm. The RecF protein is involved in DNA metabolism; it is required for DNA replication and normal SOS inducibility. RecF binds preferentially to single-stranded, linear DNA. It also seems to bind ATP. The polypeptide is DNA replication and repair protein RecF (Streptococcus equi subsp. zooepidemicus (strain H70)).